The chain runs to 667 residues: WD repeat-containing protein 48 homolog (667 aa).

WD repeat units follow at residues 26-65 (QHRNGVNALQLDSNNGKLYSAGRDAIIRVWNTRTESNDKY), 71-110 (HHNDWVNDIVLCCNGRNLISASCDTTVKVWNAHKGFCMST), 113-152 (THRDYVQALAYAKDREQVASAGLDKAIFLWDVNTLTALTA), 164-203 (GSKDSIYSLAMNPSGTVIVSGSTENILRIWDPRTCMRSMK), 206-245 (GHTENVRCLVVSPDGNQVVSGSSDGTIKVWNLGQQRCIQT), 248-287 (VHKEGVWSLLMSENFQYIISGSRDRNIIVTEMRNPSNKML), 290-329 (EEKAPVLSLGYNIDKTGVWATTWNSDIRCWKLPMYDRCTL), and 349-388 (KGGAAIKECTVLNDKRYIITKDSQDQVVVYDVLRVIKKEE). A disordered region spans residues 591 to 615 (ETTPSGGNANNSLQNSQSDANSEGS).

The protein belongs to the WD repeat WDR48 family. In terms of assembly, catalytic component of the Usp12-46 deubiquitylase complex consisting of Usp12-46, Wdr20 and Uaf1; regulatory subunit that, together wtih Wdr20, stabilizes Usp12-46. The Usp12-46 deubiquitylase complex associates with arr/arrow; the interaction leads to deubiquitination and stabilization of arr/arrow.

Its function is as follows. Regulatory component of the Usp12-46 deubiquitylase complex. activates deubiquitination by increasing the catalytic turnover without increasing the affinity of deubiquitinating enzymes for the substrate. The complex deubiquitylates the wg/wingless-signaling receptor arr/arrow, which stabilizes the receptor and increases its concentration at the cell surface; this enhances the sensitivity of cells to wg/wingless-signal stimulation. This increases the amplitude and spatial range of the signaling response to the wg/wingless morphogen gradient, facilitating the precise concentration-dependent regulation of its target genes. Together with Wdr20 and Usp12-46 required for wg/wingless-mediated signaling in the wing imaginal disc and for wg/wingless-dependent regulation of intestinal stem cell proliferation. In Drosophila virilis (Fruit fly), this protein is WD repeat-containing protein 48 homolog.